The chain runs to 310 residues: Ribosomal RNA small subunit methyltransferase H (310 aa).

Residues 32–34 (AGH), D51, F84, D102, and Q109 contribute to the S-adenosyl-L-methionine site.

The protein belongs to the methyltransferase superfamily. RsmH family.

It localises to the cytoplasm. The enzyme catalyses cytidine(1402) in 16S rRNA + S-adenosyl-L-methionine = N(4)-methylcytidine(1402) in 16S rRNA + S-adenosyl-L-homocysteine + H(+). Functionally, specifically methylates the N4 position of cytidine in position 1402 (C1402) of 16S rRNA. The protein is Ribosomal RNA small subunit methyltransferase H of Campylobacter hominis (strain ATCC BAA-381 / DSM 21671 / CCUG 45161 / LMG 19568 / NCTC 13146 / CH001A).